The primary structure comprises 62 residues: MDEKLSRVDPKLLELLVCPLSKGRLSYDREHNELVSEKAQLAYPIRDGIPIMLVSEARRLDE.

This sequence belongs to the UPF0434 family.

This Rhizobium etli (strain ATCC 51251 / DSM 11541 / JCM 21823 / NBRC 15573 / CFN 42) protein is UPF0434 protein RHE_CH03977.